The primary structure comprises 81 residues: Sulfur carrier protein TusA (81 aa).

The active-site Cysteine persulfide intermediate is the C19.

This sequence belongs to the sulfur carrier protein TusA family.

The protein resides in the cytoplasm. Its function is as follows. Sulfur carrier protein which probably makes part of a sulfur-relay system. The protein is Sulfur carrier protein TusA of Shewanella baltica (strain OS223).